Here is a 153-residue protein sequence, read N- to C-terminus: 6,7-dimethyl-8-ribityllumazine synthase (153 aa).

5-amino-6-(D-ribitylamino)uracil contacts are provided by residues Phe-22, 56 to 58, and 80 to 82; these read AFE and TVI. Residue 85 to 86 coordinates (2S)-2-hydroxy-3-oxobutyl phosphate; that stretch reads ST. His-88 acts as the Proton donor in catalysis. Phe-113 serves as a coordination point for 5-amino-6-(D-ribitylamino)uracil. Arg-127 is a (2S)-2-hydroxy-3-oxobutyl phosphate binding site.

It belongs to the DMRL synthase family. Forms an icosahedral capsid composed of 60 subunits, arranged as a dodecamer of pentamers.

The enzyme catalyses (2S)-2-hydroxy-3-oxobutyl phosphate + 5-amino-6-(D-ribitylamino)uracil = 6,7-dimethyl-8-(1-D-ribityl)lumazine + phosphate + 2 H2O + H(+). The protein operates within cofactor biosynthesis; riboflavin biosynthesis; riboflavin from 2-hydroxy-3-oxobutyl phosphate and 5-amino-6-(D-ribitylamino)uracil: step 1/2. In terms of biological role, catalyzes the formation of 6,7-dimethyl-8-ribityllumazine by condensation of 5-amino-6-(D-ribitylamino)uracil with 3,4-dihydroxy-2-butanone 4-phosphate. This is the penultimate step in the biosynthesis of riboflavin. The chain is 6,7-dimethyl-8-ribityllumazine synthase from Actinobacillus pleuropneumoniae serotype 5b (strain L20).